A 499-amino-acid chain; its full sequence is Glycerol kinase (499 aa).

ADP is bound at residue Thr13. ATP-binding residues include Thr13, Thr14, and Ser15. Thr13 lines the sn-glycerol 3-phosphate pocket. Arg17 is a binding site for ADP. Residues Arg83, Glu84, Tyr136, and Asp246 each contribute to the sn-glycerol 3-phosphate site. Positions 83, 84, 136, 246, and 247 each coordinate glycerol. ADP is bound by residues Thr268 and Gly311. ATP is bound by residues Thr268, Gly311, Gln315, and Gly412. 2 residues coordinate ADP: Gly412 and Asn416.

The protein belongs to the FGGY kinase family.

The enzyme catalyses glycerol + ATP = sn-glycerol 3-phosphate + ADP + H(+). The protein operates within polyol metabolism; glycerol degradation via glycerol kinase pathway; sn-glycerol 3-phosphate from glycerol: step 1/1. With respect to regulation, inhibited by fructose 1,6-bisphosphate (FBP). Key enzyme in the regulation of glycerol uptake and metabolism. Catalyzes the phosphorylation of glycerol to yield sn-glycerol 3-phosphate. The sequence is that of Glycerol kinase from Francisella philomiragia subsp. philomiragia (strain ATCC 25017 / CCUG 19701 / FSC 153 / O#319-036).